A 349-amino-acid chain; its full sequence is Interleukin-10 receptor subunit beta (349 aa).

The first 19 residues, M1 to G19, serve as a signal peptide directing secretion. Residues M20–S220 lie on the Extracellular side of the membrane. Fibronectin type-III domains lie at P23–T111 and I112–D215. A glycan (N-linked (GlcNAc...) asparagine) is linked at N49. A disulfide bond links C66 and C74. N-linked (GlcNAc...) asparagine glycosylation is found at N102, N161, and N199. Residues C188 and C209 are joined by a disulfide bond. A helical membrane pass occupies residues W221–C241. Residues F242–V349 lie on the Cytoplasmic side of the membrane. S299 carries the phosphoserine modification. Residues E300 to V349 form a disordered region. Positions G322–K341 are enriched in basic and acidic residues.

The protein belongs to the type II cytokine receptor family. Heterodimer with IFNLR1.

It is found in the membrane. Shared cell surface receptor required for the activation of five class 2 cytokines: IL10, IL22, IL26, IL28, and IFNL1. The IFNLR1/IL10RB dimer is a receptor for the cytokine ligands IFNL2 and IFNL3 and mediates their antiviral activity. The ligand/receptor complex stimulate the activation of the JAK/STAT signaling pathway leading to the expression of IFN-stimulated genes (ISG), which contribute to the antiviral state. This Mus musculus (Mouse) protein is Interleukin-10 receptor subunit beta (Il10rb).